The sequence spans 119 residues: Class I hydrophobin 2 (119 aa).

The signal sequence occupies residues 1 to 22 (MFARISTIITTLFFAMLAAATA). Disulfide bonds link C36-C97, C45-C91, C46-C79, and C98-C112.

Belongs to the fungal hydrophobin family. Self-assembles to form functional amyloid fibrils called rodlets. Self-assembly into fibrillar rodlets occurs spontaneously at hydrophobic:hydrophilic interfaces and the rodlets further associate laterally to form amphipathic monolayers.

The protein localises to the secreted. It is found in the cell wall. Aerial growth, conidiation, and dispersal of filamentous fungi in the environment rely upon a capability of their secreting small amphipathic proteins called hydrophobins (HPBs) with low sequence identity. Class I can self-assemble into an outermost layer of rodlet bundles on aerial cell surfaces, conferring cellular hydrophobicity that supports fungal growth, development and dispersal; whereas Class II form highly ordered films at water-air interfaces through intermolecular interactions but contribute nothing to the rodlet structure. Abh2 is a class I hydrophobin involved in the emergence of aerial hyphae and strands. In Agaricus bisporus (White button mushroom), this protein is Class I hydrophobin 2.